We begin with the raw amino-acid sequence, 375 residues long: tRNA-specific 2-thiouridylase MnmA (375 aa).

ATP-binding positions include 8-15 (GLSGGVDS) and Met34. The segment at 104–106 (NPD) is interaction with target base in tRNA. The active-site Nucleophile is the Cys109. An intrachain disulfide couples Cys109 to Cys205. Gly133 serves as a coordination point for ATP. The tract at residues 155-157 (KDQ) is interaction with tRNA. The active-site Cysteine persulfide intermediate is the Cys205. Residues 313-314 (RY) form an interaction with tRNA region.

This sequence belongs to the MnmA/TRMU family.

It localises to the cytoplasm. It carries out the reaction S-sulfanyl-L-cysteinyl-[protein] + uridine(34) in tRNA + AH2 + ATP = 2-thiouridine(34) in tRNA + L-cysteinyl-[protein] + A + AMP + diphosphate + H(+). Catalyzes the 2-thiolation of uridine at the wobble position (U34) of tRNA, leading to the formation of s(2)U34. The sequence is that of tRNA-specific 2-thiouridylase MnmA from Acholeplasma laidlawii (strain PG-8A).